The following is a 198-amino-acid chain: Elongation factor Ts (198 aa).

The segment at 81–84 (TDFV) is involved in Mg(2+) ion dislocation from EF-Tu.

This sequence belongs to the EF-Ts family.

The protein localises to the cytoplasm. In terms of biological role, associates with the EF-Tu.GDP complex and induces the exchange of GDP to GTP. It remains bound to the aminoacyl-tRNA.EF-Tu.GTP complex up to the GTP hydrolysis stage on the ribosome. In Dictyoglomus thermophilum (strain ATCC 35947 / DSM 3960 / H-6-12), this protein is Elongation factor Ts.